Consider the following 354-residue polypeptide: NADH-quinone oxidoreductase subunit H (354 aa).

Transmembrane regions (helical) follow at residues 22–42 (ILIRAVIIVVPLLLCVAYLIL), 91–111 (YLIAPLMVLMPAVAVWAVIPF), 124–144 (LLYVMAISSVGVYGVILAGWA), 168–188 (MGFALVTVLMVAGSLNLSAIV), 203–223 (ILSWNWLPLLPMFGVYFISGV), 255–275 (LFFLAEYINMIIISTMTALMF), 291–311 (IPGFFWLVIKVFLLLSVFIWI), and 326–346 (LGWKVFIPLTVAWLIIVAIWI).

The protein belongs to the complex I subunit 1 family. As to quaternary structure, NDH-1 is composed of 14 different subunits. Subunits NuoA, H, J, K, L, M, N constitute the membrane sector of the complex.

Its subcellular location is the cell inner membrane. It carries out the reaction a quinone + NADH + 5 H(+)(in) = a quinol + NAD(+) + 4 H(+)(out). Its function is as follows. NDH-1 shuttles electrons from NADH, via FMN and iron-sulfur (Fe-S) centers, to quinones in the respiratory chain. The immediate electron acceptor for the enzyme in this species is believed to be ubiquinone. Couples the redox reaction to proton translocation (for every two electrons transferred, four hydrogen ions are translocated across the cytoplasmic membrane), and thus conserves the redox energy in a proton gradient. This subunit may bind ubiquinone. This is NADH-quinone oxidoreductase subunit H from Cupriavidus necator (strain ATCC 17699 / DSM 428 / KCTC 22496 / NCIMB 10442 / H16 / Stanier 337) (Ralstonia eutropha).